The primary structure comprises 436 residues: UPF0597 protein YhaM (436 aa).

The protein belongs to the UPF0597 family.

In Shigella sonnei (strain Ss046), this protein is UPF0597 protein YhaM.